The following is a 100-amino-acid chain: Small ribosomal subunit protein bS18 (100 aa).

Positions 1–23 (MTFIRKPAGQAKPQKYSTDAYGR) are disordered.

It belongs to the bacterial ribosomal protein bS18 family. In terms of assembly, part of the 30S ribosomal subunit. Forms a tight heterodimer with protein bS6.

Binds as a heterodimer with protein bS6 to the central domain of the 16S rRNA, where it helps stabilize the platform of the 30S subunit. This Endomicrobium trichonymphae protein is Small ribosomal subunit protein bS18.